Consider the following 237-residue polypeptide: DNA repair protein RecO (237 aa).

Belongs to the RecO family.

In terms of biological role, involved in DNA repair and RecF pathway recombination. This chain is DNA repair protein RecO, found in Rickettsia peacockii (strain Rustic).